A 657-amino-acid polypeptide reads, in one-letter code: Glycogen debranching enzyme (657 aa).

The Nucleophile role is filled by Asp-336. The active-site Proton donor is Glu-371. The tract at residues 460–479 is disordered; that stretch reads ANGEENRDGTNNNYSNNHGK.

It belongs to the glycosyl hydrolase 13 family.

The enzyme catalyses Hydrolysis of (1-&gt;6)-alpha-D-glucosidic linkages to branches with degrees of polymerization of three or four glucose residues in limit dextrin.. It participates in glycan degradation; glycogen degradation. Functionally, removes maltotriose and maltotetraose chains that are attached by 1,6-alpha-linkage to the limit dextrin main chain, generating a debranched limit dextrin. This is Glycogen debranching enzyme from Escherichia coli O9:H4 (strain HS).